We begin with the raw amino-acid sequence, 217 residues long: Oxygen-insensitive NAD(P)H nitroreductase (217 aa).

Residue 10–14 participates in FMN binding; that stretch reads RYSTK. Residues lysine 14, threonine 41, asparagine 71, lysine 74, and arginine 107 each contribute to the NAD(+) site. Asparagine 71 lines the FMN pocket. FMN is bound by residues 165-166 and 205-207; these read EG and KSR.

Belongs to the nitroreductase family. As to quaternary structure, homodimer. Requires FMN as cofactor.

Functionally, reduction of a variety of nitroaromatic compounds using NADH (and to lesser extent NADPH) as source of reducing equivalents; two electrons are transferred. Capable of reducing nitrofurazone. The protein is Oxygen-insensitive NAD(P)H nitroreductase of Salmonella typhimurium (strain LT2 / SGSC1412 / ATCC 700720).